Consider the following 983-residue polypeptide: Receptor-type tyrosine-protein phosphatase-like N (983 aa).

The first 40 residues, 1–40 (MRRPRRPGGPAGCGGSEGSGGLRLLVCLLLLSGRPGGCSA), serve as a signal peptide directing secretion. An RESP18 homology domain region spans residues 41-137 (ISAHGCLFDR…HPRDRSGSVP (97 aa)). At 41-579 (ISAHGCLFDR…RQAHGISPMR (539 aa)) the chain is on the lumenal side. Cysteines 59 and 68 form a disulfide. Positions 118 to 133 (RIPRLRPPEPHPRDRS) are enriched in basic and acidic residues. Disordered regions lie at residues 118–179 (RIPR…SPLS), 293–330 (RARAPRLPEEGGSSRAEDSSEGHEEEVLGGHGEKSPPQ), and 399–420 (GDTADARPPTPLLPGHPTASST). Over residues 148 to 158 (SQGNPTGSSPA) the composition is skewed to polar residues. Basic and acidic residues predominate over residues 307–326 (RAEDSSEGHEEEVLGGHGEK). 2 positions are modified to phosphoserine: Ser-311 and Ser-312. Residues 453-579 (SPLGQSQPTV…RQAHGISPMR (127 aa)) form a sufficient for dimerization of proICA512 region. Asn-510 and Asn-528 each carry an N-linked (GlcNAc...) asparagine glycan. Residues 580–604 (SLLLTLVALAGVAGLLVALAVALCM) traverse the membrane as a helical segment. The interval 605–736 (RHHSKQRDKE…PNTCATAQGE (132 aa)) is sufficient for dimerization of proICA512. Over 605-983 (RHHSKQRDKE…VNAILKALPQ (379 aa)) the chain is Cytoplasmic. Positions 648 to 684 (RAEGQPEPSRVSSVSSQFSDAAQASPSSHSSTPSWCE) are disordered. Over residues 652-681 (QPEPSRVSSVSSQFSDAAQASPSSHSSTPS) the composition is skewed to low complexity. One can recognise a Tyrosine-protein phosphatase domain in the interval 713 to 973 (LAKEWQALCA…EFALTAVAEE (261 aa)). Lys-758 is covalently cross-linked (Glycyl lysine isopeptide (Lys-Gly) (interchain with G-Cter in SUMO)).

It belongs to the protein-tyrosine phosphatase family. Receptor class 8 subfamily. As to quaternary structure, homodimer; shown for the unprocessed protein (proICA512) in the endoplasmic reticulum and resolved during protein maturation as ICA512-TMF seems to be predominantly monomeric in secretory granules; however, ICA512-CCF interacts with ICA512-TMF disrupting the ICA512-TMF:SNTB2 complex. The isolated lumenal RESP18 homology domain has been shown to form disulfide-linked homooligomers. Interacts (via cytoplasmic domain) with phosphorylated SNTB2; this protects PTPRN against cleavage by CAPN1 to produce ICA512-CCF. Dephosphorylation of SNTB2 upon insulin stimulation disrupts the interaction and results in PTPRN cleavage. Interacts with SNX19. ICA512-CCF interacts with PIAS4; in the nucleus. Interacts with STAT5B (phosphorylated); down-regulated by ICA512-CCF sumoylation; ICA512-CCF prevents STAT5B dephosphorylation; ICA512-CCF mediates interaction of STAT5B with PIAS4. Interacts (via RESP18 homology domain) with insulin and proinsulin. Interacts with PTPRN2, PTPRA and PTPRE. Subject to proteolytic cleavage at multiple sites. Subject to cleavage on a pair of basic residues. Following exocytosis of secretory granules in pancreatic beta-cells ICA512-TMF located in the plasma-membrane is cleaved by mu-type calpain CPN1 to yield ICA512-CCF. In terms of processing, N-glycosylated. Post-translationally, O-glycosylated. Sumoylated at two sites including Lys-758. Sumoylation decreases interaction with STAT5. In terms of tissue distribution, detected in pancreas islets. Detected in pancreas alpha, beta and delta cells, and in chromaffin cells in the adrenal medulla. Detected in amygdala, hypothalamus, autonomous nerve fibers and ganglia, especially at synaptic contacts. Detected in pituitary (at protein level). Detected in brain, specifically in cerebral cortex, diencephalon and brain stem.

Its subcellular location is the membrane. The protein localises to the cytoplasmic vesicle. It is found in the secretory vesicle membrane. It localises to the perikaryon. The protein resides in the cell projection. Its subcellular location is the axon. The protein localises to the synapse. It is found in the cell membrane. It localises to the endosome. The protein resides in the nucleus. In terms of biological role, plays a role in vesicle-mediated secretory processes. Required for normal accumulation of secretory vesicles in hippocampus, pituitary and pancreatic islets. Required for the accumulation of normal levels of insulin-containing vesicles and preventing their degradation. Plays a role in insulin secretion in response to glucose stimuli. Required for normal accumulation of the neurotransmitters norepinephrine, dopamine and serotonin in the brain. In females, but not in males, required for normal accumulation and secretion of pituitary hormones, such as luteinizing hormone (LH) and follicle-stimulating hormone (FSH). Required to maintain normal levels of renin expression and renin release. Seems to lack intrinsic enzyme activity. Its function is as follows. ICA512-TMF regulates dynamics and exocytosis of insulin secretory granules (SGs); binding of ICA512-TMF to SNTB2/beta-2-syntrophin is proposed to restrain SGs mobility and exocytosis by tethering them to the actin cytoskeleton depending on UTRN; the function is inhibited by cytoplasmic ICA512-CFF dimerizing with ICA512-TMF and displacing SNTB2. ICA512-CCF translocated to the nucleus promotes expression of insulin and other granule-related genes; the function implicates binding to and regulating activity of STAT5B probably by preventing its dephosphorylation and potentially by inducing its sumoylation by recruiting PIAS4. Enhances pancreatic beta-cell proliferation by converging with signaling by STAT5B and STAT3. ICA512-CCF located in the cytoplasm regulates dynamics and exocytosis of insulin secretory granules (SGs) by dimerizing with ICA512-TMF and displacing SNTB2 thus enhancing SGs mobility and exocytosis. The protein is Receptor-type tyrosine-protein phosphatase-like N (Ptprn) of Rattus norvegicus (Rat).